Consider the following 206-residue polypeptide: Sec-independent protein translocase protein TatB (206 aa).

The helical transmembrane segment at 1–21 threads the bilayer; sequence MFDIGWTELLVIAVVLIVVVG. The interval 104–206 is disordered; it reads ENKTEVPSAA…VQTKKKKDEA (103 aa). Positions 110–124 are enriched in low complexity; that stretch reads PSAAMSAPTPSMSLP. Positions 125 to 138 are enriched in pro residues; the sequence is ETPPVVPTPAPAPE. Low complexity-rich tracts occupy residues 139–151 and 187–196; these read PAAVAAETVAAKP and ARKPAAPKTP.

The protein belongs to the TatB family. As to quaternary structure, the Tat system comprises two distinct complexes: a TatABC complex, containing multiple copies of TatA, TatB and TatC subunits, and a separate TatA complex, containing only TatA subunits. Substrates initially bind to the TatABC complex, which probably triggers association of the separate TatA complex to form the active translocon.

Its subcellular location is the cell inner membrane. Part of the twin-arginine translocation (Tat) system that transports large folded proteins containing a characteristic twin-arginine motif in their signal peptide across membranes. Together with TatC, TatB is part of a receptor directly interacting with Tat signal peptides. TatB may form an oligomeric binding site that transiently accommodates folded Tat precursor proteins before their translocation. This chain is Sec-independent protein translocase protein TatB, found in Rhizobium etli (strain ATCC 51251 / DSM 11541 / JCM 21823 / NBRC 15573 / CFN 42).